We begin with the raw amino-acid sequence, 379 residues long: Epoxyqueuosine reductase (379 aa).

The Proton donor role is filled by Asp140. The 4Fe-4S ferredoxin-type domain maps to 184–214 (FEPDTPASDLCGSCNQCVKACPTGSLLGEGK). [4Fe-4S] cluster-binding residues include Cys194, Cys197, Cys200, Cys204, Cys220, Cys246, Cys249, and Cys253. One copy of the HEAT-like PBS-type repeat lies at 307–332 (QRNAIIILARYKDKTAVPDLIDCLQN).

The protein belongs to the QueG family. Monomer. It depends on cob(II)alamin as a cofactor. [4Fe-4S] cluster serves as cofactor.

It is found in the cytoplasm. It catalyses the reaction epoxyqueuosine(34) in tRNA + AH2 = queuosine(34) in tRNA + A + H2O. It participates in tRNA modification; tRNA-queuosine biosynthesis. Catalyzes the conversion of epoxyqueuosine (oQ) to queuosine (Q), which is a hypermodified base found in the wobble positions of tRNA(Asp), tRNA(Asn), tRNA(His) and tRNA(Tyr). This Listeria monocytogenes serovar 1/2a (strain ATCC BAA-679 / EGD-e) protein is Epoxyqueuosine reductase.